A 685-amino-acid polypeptide reads, in one-letter code: Serine/threonine-protein kinase PLK2 (685 aa).

The interval 24–71 (KGCGADSKKKRPPQPPEESQPPQSQAQVPPAAAHHHHHHSHSGPEISR) is disordered. The segment covering 43–55 (QPPQSQAQVPPAA) has biased composition (low complexity). A Protein kinase domain is found at 82-334 (YCRGKVLGKG…LDDIIRHDFF (253 aa)). ATP is bound by residues 88-96 (LGKGGFAKC) and lysine 111. The active-site Proton acceptor is the aspartate 205. Position 239 is a phosphothreonine (threonine 239). The tract at residues 406-433 (SITQQPSKHRTDEELQPPTTTVARSGTP) is disordered. 2 POLO box domains span residues 503–581 (WVTK…YMEE) and 601–685 (YLLQ…QRCN).

The protein belongs to the protein kinase superfamily. Ser/Thr protein kinase family. CDC5/Polo subfamily. As to quaternary structure, interacts with NSF; causing NSF dissociation from GRIA2. Interacts with CIB1. Catalytic activity is enhanced by phosphorylation of Thr-239.

It localises to the cytoplasm. The protein localises to the cytoskeleton. It is found in the microtubule organizing center. The protein resides in the centrosome. Its subcellular location is the centriole. It localises to the cell projection. The protein localises to the dendrite. It carries out the reaction L-seryl-[protein] + ATP = O-phospho-L-seryl-[protein] + ADP + H(+). The catalysed reaction is L-threonyl-[protein] + ATP = O-phospho-L-threonyl-[protein] + ADP + H(+). With respect to regulation, activated by phosphorylation of Thr-239. Once activated, activity is stimulated by binding target proteins. Its function is as follows. Tumor suppressor serine/threonine-protein kinase involved in synaptic plasticity, centriole duplication and G1/S phase transition. Polo-like kinases act by binding and phosphorylating proteins that are already phosphorylated on a specific motif recognized by the POLO box domains. Phosphorylates CPAP, NPM1, RAPGEF2, RASGRF1, SNCA, SIPA1L1 and SYNGAP1. Plays a key role in synaptic plasticity and memory by regulating the Ras and Rap protein signaling: required for overactivity-dependent spine remodeling by phosphorylating the Ras activator RASGRF1 and the Rap inhibitor SIPA1L1 leading to their degradation by the proteasome. Conversely, phosphorylates the Rap activator RAPGEF2 and the Ras inhibitor SYNGAP1, promoting their activity. Also regulates synaptic plasticity independently of kinase activity, via its interaction with NSF that disrupts the interaction between NSF and the GRIA2 subunit of AMPARs, leading to a rapid rundown of AMPAR-mediated current that occludes long term depression. Required for procentriole formation and centriole duplication by phosphorylating CPAP and NPM1, respectively. Its induction by p53/TP53 suggests that it may participate in the mitotic checkpoint following stress. This chain is Serine/threonine-protein kinase PLK2 (PLK2), found in Pongo abelii (Sumatran orangutan).